The sequence spans 184 residues: Large ribosomal subunit protein eL18 (184 aa).

The protein belongs to the eukaryotic ribosomal protein eL18 family.

It localises to the cytoplasm. The polypeptide is Large ribosomal subunit protein eL18 (RPL18) (Theileria parva (East coast fever infection agent)).